A 329-amino-acid polypeptide reads, in one-letter code: Ubiquitin carboxyl-terminal hydrolase isozyme L5 (329 aa).

The 219-residue stretch at glutamate 7 to serine 225 folds into the UCH catalytic domain. Residue lysine 47 is modified to N6-succinyllysine. Cysteine 88 (nucleophile) is an active-site residue. Lysine 158 carries the post-translational modification N6-acetyllysine. Histidine 164 acts as the Proton donor in catalysis. Lysine 289 is subject to N6-succinyllysine. Positions asparagine 291 to lysine 319 constitute a ULD domain. Residues valine 313–lysine 329 are interaction with ADRM1.

This sequence belongs to the peptidase C12 family. As to quaternary structure, component of the 19S (PA700) regulatory complex of the 26S proteasome. Interacts with ADRM1 and NFRKB. Component of the INO80 complex; specifically part of a complex module associated with N-terminus of INO80.

Its subcellular location is the cytoplasm. The protein resides in the nucleus. The enzyme catalyses Thiol-dependent hydrolysis of ester, thioester, amide, peptide and isopeptide bonds formed by the C-terminal Gly of ubiquitin (a 76-residue protein attached to proteins as an intracellular targeting signal).. Its activity is regulated as follows. Activated by ADRM1. Inhibited by interaction with NFRKB. Its function is as follows. Protease that specifically cleaves 'Lys-48'-linked polyubiquitin chains. Deubiquitinating enzyme associated with the 19S regulatory subunit of the 26S proteasome. Putative regulatory component of the INO80 complex; however is inactive in the INO80 complex and is activated by a transient interaction of the INO80 complex with the proteasome via ADRM1. The protein is Ubiquitin carboxyl-terminal hydrolase isozyme L5 (UCHL5) of Sus scrofa (Pig).